A 193-amino-acid polypeptide reads, in one-letter code: MAMALALGGGQDAERKVKVAEVALRALLCGLGALAAALVATDTQTRTFFSLQKKASYTDMKAMVFLVDAAAVAAGYSLLQLAARCCGGGAMSSGRGDGGGRGRALSWCVFSCDQALAYVLLAAVAAALQASVVAKRGQPELQWMGICALYGAFCRQAGAGLATAVVAGLAAVLLAFLSAFNLFRLYGSGGTKS.

Residues 1–18 lie on the Cytoplasmic side of the membrane; it reads MAMALALGGGQDAERKVK. A helical membrane pass occupies residues 19–39; sequence VAEVALRALLCGLGALAAALV. At 40-61 the chain is on the extracellular side; it reads ATDTQTRTFFSLQKKASYTDMK. The chain crosses the membrane as a helical span at residues 62-82; it reads AMVFLVDAAAVAAGYSLLQLA. Topologically, residues 83–113 are cytoplasmic; sequence ARCCGGGAMSSGRGDGGGRGRALSWCVFSCD. A helical transmembrane segment spans residues 114-134; that stretch reads QALAYVLLAAVAAALQASVVA. At 135-156 the chain is on the extracellular side; the sequence is KRGQPELQWMGICALYGAFCRQ. Residues 157–177 traverse the membrane as a helical segment; sequence AGAGLATAVVAGLAAVLLAFL. Residues 178-193 lie on the Cytoplasmic side of the membrane; it reads SAFNLFRLYGSGGTKS.

The protein belongs to the Casparian strip membrane proteins (CASP) family. In terms of assembly, homodimer and heterodimers.

Its subcellular location is the cell membrane. The chain is CASP-like protein 2U1 from Sorghum bicolor (Sorghum).